A 68-amino-acid polypeptide reads, in one-letter code: DNA gyrase inhibitor YacG (68 aa).

Residues Cys-14, Cys-17, Cys-29, and Cys-33 each contribute to the Zn(2+) site.

The protein belongs to the DNA gyrase inhibitor YacG family. In terms of assembly, interacts with GyrB. It depends on Zn(2+) as a cofactor.

Inhibits all the catalytic activities of DNA gyrase by preventing its interaction with DNA. Acts by binding directly to the C-terminal domain of GyrB, which probably disrupts DNA binding by the gyrase. This chain is DNA gyrase inhibitor YacG, found in Azorhizobium caulinodans (strain ATCC 43989 / DSM 5975 / JCM 20966 / LMG 6465 / NBRC 14845 / NCIMB 13405 / ORS 571).